The sequence spans 131 residues: Small ribosomal subunit protein uS8 (131 aa).

Belongs to the universal ribosomal protein uS8 family. As to quaternary structure, part of the 30S ribosomal subunit. Contacts proteins S5 and S12.

Its function is as follows. One of the primary rRNA binding proteins, it binds directly to 16S rRNA central domain where it helps coordinate assembly of the platform of the 30S subunit. This Burkholderia lata (strain ATCC 17760 / DSM 23089 / LMG 22485 / NCIMB 9086 / R18194 / 383) protein is Small ribosomal subunit protein uS8.